The sequence spans 431 residues: Argininosuccinate lyase (431 aa).

Belongs to the lyase 1 family. Argininosuccinate lyase subfamily.

The protein resides in the cytoplasm. The catalysed reaction is 2-(N(omega)-L-arginino)succinate = fumarate + L-arginine. Its pathway is amino-acid biosynthesis; L-arginine biosynthesis; L-arginine from L-ornithine and carbamoyl phosphate: step 3/3. This is Argininosuccinate lyase from Xanthomonas campestris pv. campestris (strain ATCC 33913 / DSM 3586 / NCPPB 528 / LMG 568 / P 25).